Reading from the N-terminus, the 429-residue chain is Glycine betaine monooxygenase oxygenase subunit (429 aa).

The 108-residue stretch at 56-163 (WLIAGMTCEI…VKTAGGYIFI (108 aa)) folds into the Rieske domain. The [2Fe-2S] cluster site is built by Cys-98, His-100, Cys-118, and His-121. Residues His-217 and His-222 each contribute to the Fe cation site.

This sequence belongs to the bacterial ring-hydroxylating dioxygenase alpha subunit family. As to quaternary structure, the system is composed of an oxygenase subunit (GbcA) and a reductase subunit (GbcB). It depends on [2Fe-2S] cluster as a cofactor. Fe cation serves as cofactor.

It carries out the reaction glycine betaine + NADH + O2 + H(+) = N,N-dimethylglycine + formaldehyde + NAD(+) + H2O. Its function is as follows. Involved in degradation of glycine betaine. Part of a Rieske-type oxygenase system that catalyzes the conversion of glycine betaine (GB) to dimethylglycine (DMG). This subunit is the terminal oxygenase component of the system. Required for growth on choline and GB, but not for growth on DMG. The sequence is that of Glycine betaine monooxygenase oxygenase subunit from Pseudomonas aeruginosa (strain ATCC 15692 / DSM 22644 / CIP 104116 / JCM 14847 / LMG 12228 / 1C / PRS 101 / PAO1).